The primary structure comprises 259 residues: Bisphosphoglycerate mutase (259 aa).

Serine 2 is modified (N-acetylserine). N-linked (Glc) (glycation) lysine; in vitro glycans are attached at residues lysine 3 and lysine 5. 10–17 (RHGEGAWN) contacts substrate. Histidine 11 functions as the Tele-phosphohistidine intermediate in the catalytic mechanism. The N-linked (Glc) (glycation) lysine; in vitro glycan is linked to lysine 18. 23–24 (CS) is a binding site for substrate. Residue lysine 43 is glycosylated (N-linked (Glc) (glycation) lysine; in vitro). Residues arginine 62, 89–92 (ERHY), arginine 100, and 116–117 (RR) contribute to the substrate site. Residue glutamate 89 is the Proton donor/acceptor of the active site. A Phosphothreonine modification is found at threonine 122. Lysine 159 carries an N-linked (Glc) (glycation) lysine glycan. Residue 189–190 (GN) participates in substrate binding. Lysine 197 carries an N-linked (Glc) (glycation) lysine; in vitro glycan.

Belongs to the phosphoglycerate mutase family. BPG-dependent PGAM subfamily. Homodimer. Glycation of Lys-159 in diabetic patients inactivates the enzyme. Expressed in red blood cells. Expressed in non-erythroid cells of the placenta; present in the syncytiotrophoblast layer of the placental villi at the feto-maternal interface (at protein level).

The catalysed reaction is (2R)-3-phospho-glyceroyl phosphate = (2R)-2,3-bisphosphoglycerate + H(+). It carries out the reaction (2R)-2-phosphoglycerate = (2R)-3-phosphoglycerate. With respect to regulation, at alkaline pH BPGM favors the synthase reaction; however, at lower pH the phosphatase reaction is dominant. Inhibited by citrate. Plays a major role in regulating hemoglobin oxygen affinity by controlling the levels of its allosteric effector 2,3-bisphosphoglycerate (2,3-BPG). Also exhibits mutase (EC 5.4.2.11) activity. The sequence is that of Bisphosphoglycerate mutase (BPGM) from Homo sapiens (Human).